The chain runs to 411 residues: Probable tRNA pseudouridine synthase D (411 aa).

Aspartate 81 (nucleophile) is an active-site residue. Residues glycine 154 to leucine 375 enclose the TRUD domain.

The protein belongs to the pseudouridine synthase TruD family.

The enzyme catalyses uridine(13) in tRNA = pseudouridine(13) in tRNA. Its function is as follows. Could be responsible for synthesis of pseudouridine from uracil-13 in transfer RNAs. The sequence is that of Probable tRNA pseudouridine synthase D from Archaeoglobus fulgidus (strain ATCC 49558 / DSM 4304 / JCM 9628 / NBRC 100126 / VC-16).